Here is a 236-residue protein sequence, read N- to C-terminus: Mitochondrial-abundant heat soluble protein (236 aa).

A mitochondrion-targeting transit peptide spans 1–73 (MSRYLLRDVQ…AARAGVVLRG (73 aa)). Disordered regions lie at residues 102 to 135 (RIHS…NEAA) and 165 to 209 (RSNG…EIVA). Composition is skewed to polar residues over residues 105–126 (SQSS…NSPQ) and 192–202 (APDSSKNTKSV). The MAHS motif signature appears at 126 to 143 (QPEGKANEAAERAKQFMN).

Its subcellular location is the mitochondrion. Its function is as follows. Mitochondrial heat soluble protein acting as a molecular shield in water-deficient condition. This Ramazzottius varieornatus (Water bear) protein is Mitochondrial-abundant heat soluble protein.